A 286-amino-acid polypeptide reads, in one-letter code: Aminoglycoside N(3)-acetyltransferase III (286 aa).

The protein belongs to the antibiotic N-acetyltransferase family.

The enzyme catalyses a 2-deoxystreptamine antibiotic + acetyl-CoA = an N(3)-acetyl-2-deoxystreptamine antibiotic + CoA + H(+). Its function is as follows. Resistance to antibiotics containing the 2-deoxy-streptamine ring including gentamicin, kanamycin, tobramycin, neomycin and apramycin. In Salmonella sp, this protein is Aminoglycoside N(3)-acetyltransferase III (aacC3).